Reading from the N-terminus, the 51-residue chain is Putative inactivation escape 1 protein (51 aa).

In terms of tissue distribution, highly expressed in pancreas, heart and liver followed by brain, placenta, lung, skeletal muscle and kidney. Mostly expressed in females.

The polypeptide is Putative inactivation escape 1 protein (INE1) (Homo sapiens (Human)).